The sequence spans 253 residues: Cell division protein ZapD (253 aa).

This sequence belongs to the ZapD family. As to quaternary structure, interacts with FtsZ.

Its subcellular location is the cytoplasm. Functionally, cell division factor that enhances FtsZ-ring assembly. Directly interacts with FtsZ and promotes bundling of FtsZ protofilaments, with a reduction in FtsZ GTPase activity. The sequence is that of Cell division protein ZapD from Bordetella bronchiseptica (strain ATCC BAA-588 / NCTC 13252 / RB50) (Alcaligenes bronchisepticus).